A 534-amino-acid polypeptide reads, in one-letter code: Glucans biosynthesis protein D (534 aa).

A signal peptide (tat-type signal) is located at residues 1–28 (MYRRDFLKSVTAAWVAFGLPNPLGGAFA).

The protein belongs to the OpgD/OpgG family. In terms of processing, predicted to be exported by the Tat system. The position of the signal peptide cleavage has not been experimentally proven.

It is found in the periplasm. It participates in glycan metabolism; osmoregulated periplasmic glucan (OPG) biosynthesis. Its function is as follows. Probably involved in the control of the structural glucose backbone of osmoregulated periplasmic glucans (OPGs). The protein is Glucans biosynthesis protein D of Xylella fastidiosa (strain M23).